The following is a 124-amino-acid chain: ATP synthase epsilon chain (124 aa).

It belongs to the ATPase epsilon chain family. F-type ATPases have 2 components, CF(1) - the catalytic core - and CF(0) - the membrane proton channel. CF(1) has five subunits: alpha(3), beta(3), gamma(1), delta(1), epsilon(1). CF(0) has three main subunits: a, b and c.

The protein resides in the cell membrane. Its function is as follows. Produces ATP from ADP in the presence of a proton gradient across the membrane. The protein is ATP synthase epsilon chain of Streptomyces avermitilis (strain ATCC 31267 / DSM 46492 / JCM 5070 / NBRC 14893 / NCIMB 12804 / NRRL 8165 / MA-4680).